We begin with the raw amino-acid sequence, 207 residues long: Ribosomal RNA small subunit methyltransferase G (207 aa).

S-adenosyl-L-methionine contacts are provided by residues G73, L78, 124-125, and R139; that span reads VE.

This sequence belongs to the methyltransferase superfamily. RNA methyltransferase RsmG family.

It localises to the cytoplasm. The enzyme catalyses guanosine(527) in 16S rRNA + S-adenosyl-L-methionine = N(7)-methylguanosine(527) in 16S rRNA + S-adenosyl-L-homocysteine. Its function is as follows. Specifically methylates the N7 position of guanine in position 527 of 16S rRNA. The sequence is that of Ribosomal RNA small subunit methyltransferase G from Enterobacter sp. (strain 638).